The sequence spans 147 residues: DNA polymerase III subunit chi (147 aa).

This sequence belongs to the DNA polymerase III chi/HolC chain family. As to quaternary structure, the DNA polymerase III holoenzyme complex contains at least 10 different subunits organized into 3 functionally essential subassemblies: the Pol III core, the beta sliding clamp processivity factor and the clamp-loading complex. The Pol III core (subunits alpha, epsilon and theta) contains the polymerase and the 3'-5' exonuclease proofreading activities. The polymerase is tethered to the template via the dimeric beta sliding clamp processivity factor. The clamp-loading complex (also called gamma complex) assembles the beta sliding clamp onto the primed template and plays a central role in the organization and communication at the replication fork. The clamp-loading complex contains delta, delta', psi and chi, and 3 copies of either or both of two different DnaX proteins, gamma and tau. The DNA replisome complex has a single clamp loader (3 tau and 1 each of delta, delta', psi and chi subunits) which binds 3 Pol III cores (1 core on the leading strand and 2 on the lagging strand) each with a beta sliding clamp dimer. Additional proteins in the replisome are other copies of gamma, psi (holD) and chi (this protein), SSB, DNA helicase and RNA primase. The clamp loader hydrolyzes ATP to assemble the beta processivity factor onto the primed template and plays a central role in the organization and communication at the replication fork. The only subunit of the DNA polymerase III holoenzyme known to interact with single-stranded DNA binding protein (SSB). Interacts directly with the psi subunit (holD). Interacts directly with DNA helicase YoaA. It binds to HolD and YoaA, but not both simultaneously.

The catalysed reaction is DNA(n) + a 2'-deoxyribonucleoside 5'-triphosphate = DNA(n+1) + diphosphate. Part of the beta sliding clamp loading complex, which hydrolyzes ATP to load the beta clamp onto primed DNA to form the DNA replication pre-initiation complex. DNA polymerase III is a complex, multichain enzyme responsible for most of the replicative synthesis in bacteria. This DNA polymerase also exhibits 3' to 5' exonuclease activity. Genetically identified as involved in the repair of replication forks and tolerance of the chain-terminating nucleoside analog 3' AZT. This subunit may stabilize YoaA and/or stimulate the helicase activity of YoaA. This is DNA polymerase III subunit chi from Escherichia coli (strain K12).